Here is a 379-residue protein sequence, read N- to C-terminus: Acyl-CoA dehydrogenase, short-chain specific (379 aa).

This sequence belongs to the acyl-CoA dehydrogenase family. It depends on FAD as a cofactor.

It catalyses the reaction butanoyl-CoA + oxidized [electron-transfer flavoprotein] + H(+) = (2E)-butenoyl-CoA + reduced [electron-transfer flavoprotein]. It carries out the reaction a short-chain 2,3-saturated fatty acyl-CoA + oxidized [electron-transfer flavoprotein] + H(+) = a short-chain (2E)-enoyl-CoA + reduced [electron-transfer flavoprotein]. It participates in lipid metabolism; butanoate metabolism. The protein is Acyl-CoA dehydrogenase, short-chain specific (bcd) of Clostridium acetobutylicum (strain ATCC 824 / DSM 792 / JCM 1419 / IAM 19013 / LMG 5710 / NBRC 13948 / NRRL B-527 / VKM B-1787 / 2291 / W).